Consider the following 478-residue polypeptide: Glycogen synthase (478 aa).

Lys15 is a binding site for ADP-alpha-D-glucose.

Belongs to the glycosyltransferase 1 family. Bacterial/plant glycogen synthase subfamily.

The enzyme catalyses [(1-&gt;4)-alpha-D-glucosyl](n) + ADP-alpha-D-glucose = [(1-&gt;4)-alpha-D-glucosyl](n+1) + ADP + H(+). The protein operates within glycan biosynthesis; glycogen biosynthesis. Its function is as follows. Synthesizes alpha-1,4-glucan chains using ADP-glucose. This Caldicellulosiruptor bescii (strain ATCC BAA-1888 / DSM 6725 / KCTC 15123 / Z-1320) (Anaerocellum thermophilum) protein is Glycogen synthase.